The chain runs to 272 residues: HTH-type transcriptional repressor AllR (272 aa).

Residues 1–20 are disordered; the sequence is MTEVRRRGRPGQAEPTAQKG. An HTH iclR-type domain is found at 21-83; it reads AQALERGIAI…SQLGWWHIGL (63 aa). The segment at residues 43–62 is a DNA-binding region (H-T-H motif); sequence VSDISGSLDLPLSTTFRLLK. Residues 98–267 form the IclR-ED domain; the sequence is VLSVAGPFMH…AKDISTALGL (170 aa). Glyoxylate contacts are provided by residues 154 to 156, D207, C217, and 234 to 236; these read SGA and SIS.

Its function is as follows. Negative regulator of allantoin and glyoxylate utilization operons. Binds to the gcl promoter and to the allS-allA intergenic region. In Salmonella typhi, this protein is HTH-type transcriptional repressor AllR (allR).